A 356-amino-acid polypeptide reads, in one-letter code: Probable methyltransferase-like protein 15 homolog (356 aa).

S-adenosyl-L-methionine contacts are provided by residues 55-57 (GGH), aspartate 74, phenylalanine 103, aspartate 126, and glutamine 133.

Belongs to the methyltransferase superfamily. RsmH family.

Probable S-adenosyl-L-methionine-dependent methyltransferase. The polypeptide is Probable methyltransferase-like protein 15 homolog (Drosophila melanogaster (Fruit fly)).